The chain runs to 138 residues: ATP synthase epsilon chain (138 aa).

This sequence belongs to the ATPase epsilon chain family. In terms of assembly, F-type ATPases have 2 components, CF(1) - the catalytic core - and CF(0) - the membrane proton channel. CF(1) has five subunits: alpha(3), beta(3), gamma(1), delta(1), epsilon(1). CF(0) has three main subunits: a, b and c.

The protein localises to the cell inner membrane. Produces ATP from ADP in the presence of a proton gradient across the membrane. The sequence is that of ATP synthase epsilon chain from Polaromonas sp. (strain JS666 / ATCC BAA-500).